The primary structure comprises 791 residues: Biofilm architecture maintenance protein MbaA (791 aa).

Residues 1 to 23 (MKLNHRILLLIAPVILLSAAASS) form the signal peptide. Topologically, residues 24 to 259 (YIIYTSQKNA…NAQLHSIQRE (236 aa)) are periplasmic. A helical membrane pass occupies residues 260 to 280 (LLLSFGVSALVTVLMLLLLLY). Residues 281-333 (RHVINPILHLDKQLEEVENNQRKNIEKLNTDDEIGRLSSRFYAMYSELHSTYQ) enclose the HAMP domain. At 281-791 (RHVINPILHL…FTEPSQSECR (511 aa)) the chain is on the cytoplasmic side. Residues 368–509 (QHIWVMYIDL…GKNQVAYYSQ (142 aa)) enclose the GGDEF domain. The 252-residue stretch at 518 to 769 (RNNIERALRL…EISPWLHASN (252 aa)) folds into the EAL domain.

The protein resides in the cell inner membrane. In terms of biological role, plays an essential role in the maintenance and the formation of the three-dimensional structure of the biofilms at the later stages of their development. Absence of mbaA promotes the accumulation of larger amount of biomass on the surfaces at later stage of development, results in the overproduction of an extracellular polymeric substance that accumulates in the matrix of biofilms. This yields biofilms lacking the typical structure consisting of pillars of cells separated by fluid filled channels. This Vibrio cholerae serotype O1 (strain ATCC 39315 / El Tor Inaba N16961) protein is Biofilm architecture maintenance protein MbaA (mbaA).